Consider the following 156-residue polypeptide: Small ribosomal subunit protein uS7 (156 aa).

It belongs to the universal ribosomal protein uS7 family. In terms of assembly, part of the 30S ribosomal subunit. Contacts proteins S9 and S11.

Functionally, one of the primary rRNA binding proteins, it binds directly to 16S rRNA where it nucleates assembly of the head domain of the 30S subunit. Is located at the subunit interface close to the decoding center, probably blocks exit of the E-site tRNA. This is Small ribosomal subunit protein uS7 from Brucella anthropi (strain ATCC 49188 / DSM 6882 / CCUG 24695 / JCM 21032 / LMG 3331 / NBRC 15819 / NCTC 12168 / Alc 37) (Ochrobactrum anthropi).